The following is a 135-amino-acid chain: Large ribosomal subunit protein uL16c (135 aa).

It belongs to the universal ribosomal protein uL16 family. In terms of assembly, part of the 50S ribosomal subunit.

Its subcellular location is the plastid. It is found in the chloroplast. The protein is Large ribosomal subunit protein uL16c of Platanus occidentalis (Sycamore).